Consider the following 181-residue polypeptide: MNKEQQDLQTEQEAAVETAELTPEQQLVQLQEKLAAKEQEAKDNWDKLLRERADLENYRKRASREKEELLNYGIKSLVEEVLPVLDNLERALEHANEDGLPALVEGVKMTHTLLQTALKKFGVCAVDGNCGTLFDPAFHQAMAQVETSDHPNNTIVQEFQKGYLLKERLLRPSMVSVAKNP.

The disordered stretch occupies residues 1 to 21 (MNKEQQDLQTEQEAAVETAEL). The segment covering 8–21 (LQTEQEAAVETAEL) has biased composition (low complexity).

This sequence belongs to the GrpE family. Homodimer.

The protein localises to the cytoplasm. In terms of biological role, participates actively in the response to hyperosmotic and heat shock by preventing the aggregation of stress-denatured proteins, in association with DnaK and GrpE. It is the nucleotide exchange factor for DnaK and may function as a thermosensor. Unfolded proteins bind initially to DnaJ; upon interaction with the DnaJ-bound protein, DnaK hydrolyzes its bound ATP, resulting in the formation of a stable complex. GrpE releases ADP from DnaK; ATP binding to DnaK triggers the release of the substrate protein, thus completing the reaction cycle. Several rounds of ATP-dependent interactions between DnaJ, DnaK and GrpE are required for fully efficient folding. The polypeptide is Protein GrpE (Trichlorobacter lovleyi (strain ATCC BAA-1151 / DSM 17278 / SZ) (Geobacter lovleyi)).